Consider the following 416-residue polypeptide: Lactose permease (416 aa).

The Cytoplasmic segment spans residues 1-13; the sequence is MKLSELAPRERHN. A helical transmembrane segment spans residues 14-34; sequence FIYFMLFFFFYYFIMSAYFPF. The Periplasmic portion of the chain corresponds to 35–50; that stretch reads FPVWLAEVNHLTKTET. Residues 51-71 form a helical membrane-spanning segment; the sequence is GIVFSCISLFAIIFQPVFGLI. Residues 72 to 80 are Cytoplasmic-facing; the sequence is SDKLGLRKH. Residues 81–101 form a helical membrane-spanning segment; that stretch reads LLWTITILLILFAPFFIFVFS. Residue proline 102 is a topological domain, periplasmic. The helical transmembrane segment at 103 to 123 threads the bilayer; it reads LLQMNIMAGALVGGVYLGIVF. The Cytoplasmic portion of the chain corresponds to 124 to 149; sequence SSRSGAVEAYIERVSRANRFEYGKVR. A run of 2 helical transmembrane segments spans residues 150–170 and 171–191; these read VSGC…FSID and PNIT…LLWV. Residues 192 to 223 lie on the Cytoplasmic side of the membrane; the sequence is SKPESSNSAEVIDALGANRQAFSMRTAAELFR. Residues 224-244 traverse the membrane as a helical segment; that stretch reads MPRFWGFIIYVVGVASVYDVF. Residues 245–267 lie on the Periplasmic side of the membrane; that stretch reads DQQFANFFKGFFSSPQRGTEVFG. A helical transmembrane segment spans residues 268-288; that stretch reads FVTTGGELLNALIMFCAPAII. At 289 to 295 the chain is on the cytoplasmic side; that stretch reads NRIGAKN. The next 2 membrane-spanning stretches (helical) occupy residues 296–316 and 317–337; these read ALLI…FATS and AVEV…LLVG. Over 338-353 the chain is Cytoplasmic; the sequence is TFKYISSAFKGKLSAT. Residues 354–374 form a helical membrane-spanning segment; it reads LFLIGFNLSKQLSSVVLSAWV. The Periplasmic portion of the chain corresponds to 375 to 384; that stretch reads GRMYDTVGFH. A helical transmembrane segment spans residues 385–405; it reads QAYLILGCITLSFTVISLFTL. The Cytoplasmic portion of the chain corresponds to 406–416; it reads KGSKTLLPATA.

It belongs to the major facilitator superfamily. Oligosaccharide:H(+) symporter (OHS) (TC 2.A.1.5) family.

The protein localises to the cell inner membrane. It catalyses the reaction lactose(in) + H(+)(in) = lactose(out) + H(+)(out). Responsible for transport of beta-galactosides into the cell, with the concomitant import of a proton (symport system). In Klebsiella oxytoca, this protein is Lactose permease (lacY).